The sequence spans 196 residues: Elongation factor Ts (196 aa).

Residues 80 to 83 (TDFV) are involved in Mg(2+) ion dislocation from EF-Tu.

The protein belongs to the EF-Ts family. As to quaternary structure, heterotetramer composed of two EF-Ts.EF-Tu dimer complexes.

The protein resides in the cytoplasm. Its function is as follows. Associates with the EF-Tu.GDP complex and induces the exchange of GDP to GTP. It remains bound to the aminoacyl-tRNA.EF-Tu.GTP complex up to the GTP hydrolysis stage on the ribosome. The sequence is that of Elongation factor Ts (tsf) from Thermus thermophilus (strain ATCC 27634 / DSM 579 / HB8).